The primary structure comprises 185 residues: MVLSSQLSVGMFISTKDGLYKVVSVSKVSGSKGDTFIKVALQAAGSDVVVERNFKAGQEVKEAQFEPRNLEYLYLEEDNYLFLDLGNYEKIYIPKEIMKENAMFLKAGVTISALVHEGIVFSMELPHFLELMVSKTDFPGDSLSLSGGAKKALLETGVEVLVPPFVEIGDVIKVDTRTCEYIQRV.

Belongs to the elongation factor P family.

The protein resides in the cytoplasm. It participates in protein biosynthesis; polypeptide chain elongation. Involved in peptide bond synthesis. Stimulates efficient translation and peptide-bond synthesis on native or reconstituted 70S ribosomes in vitro. Probably functions indirectly by altering the affinity of the ribosome for aminoacyl-tRNA, thus increasing their reactivity as acceptors for peptidyl transferase. This chain is Elongation factor P 1 (efp1), found in Chlamydia muridarum (strain MoPn / Nigg).